A 246-amino-acid polypeptide reads, in one-letter code: Putative outer membrane protein YiaT (246 aa).

An N-terminal signal peptide occupies residues 1 to 21; it reads MLINRNIVALFALPFMASATA.

This sequence belongs to the MipA/OmpV family.

The protein localises to the cell outer membrane. This chain is Putative outer membrane protein YiaT (yiaT), found in Escherichia coli (strain K12).